We begin with the raw amino-acid sequence, 415 residues long: Gamma-glutamyl phosphate reductase (415 aa).

Belongs to the gamma-glutamyl phosphate reductase family.

Its subcellular location is the cytoplasm. It catalyses the reaction L-glutamate 5-semialdehyde + phosphate + NADP(+) = L-glutamyl 5-phosphate + NADPH + H(+). It functions in the pathway amino-acid biosynthesis; L-proline biosynthesis; L-glutamate 5-semialdehyde from L-glutamate: step 2/2. Its function is as follows. Catalyzes the NADPH-dependent reduction of L-glutamate 5-phosphate into L-glutamate 5-semialdehyde and phosphate. The product spontaneously undergoes cyclization to form 1-pyrroline-5-carboxylate. In Pseudoalteromonas translucida (strain TAC 125), this protein is Gamma-glutamyl phosphate reductase.